Consider the following 317-residue polypeptide: D-alanine--D-alanine ligase (317 aa).

The region spanning 111–308 is the ATP-grasp domain; sequence KRFWNGIGIP…YASLVEKIAQ (198 aa). 137–192 provides a ligand contact to ATP; sequence EEQMSYPVIVKPSREGSTIGINKAMNRAELDDALIKALEYDSDILVEEFIDGPEFT. Positions 262, 275, and 277 each coordinate Mg(2+).

The protein belongs to the D-alanine--D-alanine ligase family. It depends on Mg(2+) as a cofactor. Mn(2+) is required as a cofactor.

The protein localises to the cytoplasm. It carries out the reaction 2 D-alanine + ATP = D-alanyl-D-alanine + ADP + phosphate + H(+). Its pathway is cell wall biogenesis; peptidoglycan biosynthesis. In terms of biological role, cell wall formation. This chain is D-alanine--D-alanine ligase, found in Marinomonas sp. (strain MWYL1).